Here is a 177-residue protein sequence, read N- to C-terminus: Large ribosomal subunit protein uL6 (177 aa).

Residues 155–177 (EPYKGKGVKHADERIFRKEGKKK) are disordered.

The protein belongs to the universal ribosomal protein uL6 family. As to quaternary structure, part of the 50S ribosomal subunit.

In terms of biological role, this protein binds to the 23S rRNA, and is important in its secondary structure. It is located near the subunit interface in the base of the L7/L12 stalk, and near the tRNA binding site of the peptidyltransferase center. This is Large ribosomal subunit protein uL6 from Bartonella tribocorum (strain CIP 105476 / IBS 506).